Here is a 341-residue protein sequence, read N- to C-terminus: Small ribosomal subunit protein uS3 (341 aa).

Positions 38–106 constitute a KH type-2 domain; sequence IRRMMTRGME…QVQLNILEVK (69 aa). Disordered regions lie at residues 224–246 and 274–341; these read RAVR…LETA and PAGQ…TKEG. Composition is skewed to low complexity over residues 285 to 303 and 311 to 333; these read AEQP…VTGE and AAPA…DAPS.

This sequence belongs to the universal ribosomal protein uS3 family. Part of the 30S ribosomal subunit. Forms a tight complex with proteins S10 and S14.

Binds the lower part of the 30S subunit head. Binds mRNA in the 70S ribosome, positioning it for translation. This is Small ribosomal subunit protein uS3 from Acidothermus cellulolyticus (strain ATCC 43068 / DSM 8971 / 11B).